Reading from the N-terminus, the 223-residue chain is Imidazoleglycerol-phosphate dehydratase (223 aa).

It belongs to the imidazoleglycerol-phosphate dehydratase family.

It catalyses the reaction D-erythro-1-(imidazol-4-yl)glycerol 3-phosphate = 3-(imidazol-4-yl)-2-oxopropyl phosphate + H2O. It participates in amino-acid biosynthesis; L-histidine biosynthesis; L-histidine from 5-phospho-alpha-D-ribose 1-diphosphate: step 6/9. This chain is Imidazoleglycerol-phosphate dehydratase (HIS3), found in Zygosaccharomyces bailii.